The following is a 436-amino-acid chain: RNA-binding motif, single-stranded-interacting protein 3 (436 aa).

Residues 28-56 (APAPHPMAPPSPSTNSSSNNSSNNSSGEQ) form a disordered region. Positions 30–39 (APHPMAPPSP) are enriched in pro residues. Positions 40 to 53 (STNSSSNNSSNNSS) are enriched in low complexity. RRM domains are found at residues 60–133 (TNLY…MAKQ) and 139–224 (TNLY…FADG). Residues 398–421 (TSPQTVAPSSQDTSGQQQQIAVDT) show a composition bias toward polar residues. Positions 398 to 436 (TSPQTVAPSSQDTSGQQQQIAVDTSNEHAPAYSYQQSKP) are disordered.

Its subcellular location is the cytoplasm. Binds poly(A) and poly(U) oligoribonucleotides. The chain is RNA-binding motif, single-stranded-interacting protein 3 (RBMS3) from Pongo abelii (Sumatran orangutan).